A 430-amino-acid polypeptide reads, in one-letter code: Asparagine--tRNA ligase (430 aa).

The protein belongs to the class-II aminoacyl-tRNA synthetase family. Homodimer.

It is found in the cytoplasm. The catalysed reaction is tRNA(Asn) + L-asparagine + ATP = L-asparaginyl-tRNA(Asn) + AMP + diphosphate + H(+). This chain is Asparagine--tRNA ligase, found in Listeria monocytogenes serotype 4b (strain F2365).